The chain runs to 747 residues: Probable copper-transporting ATPase PacS (747 aa).

The Cytoplasmic portion of the chain corresponds to methionine 1–serine 101. The region spanning asparagine 3–phenylalanine 69 is the HMA domain. Cysteine 14 and cysteine 17 together coordinate a metal cation. A helical membrane pass occupies residues glycine 102–proline 122. The Extracellular segment spans residues glycine 123–glycine 132. A helical membrane pass occupies residues leucine 133–asparagine 151. Topologically, residues alanine 152 to glutamine 158 are cytoplasmic. Residues asparagine 159 to leucine 179 form a helical membrane-spanning segment. The Extracellular portion of the chain corresponds to alanine 180–tyrosine 199. A helical transmembrane segment spans residues glutamate 200–lysine 220. At glycine 221–glutamine 348 the chain is on the cytoplasmic side. The chain crosses the membrane as a helical span at residues valine 349 to tryptophan 371. The Extracellular portion of the chain corresponds to isoleucine 372–alanine 378. A helical transmembrane segment spans residues leucine 379 to leucine 396. Over alanine 397–isoleucine 688 the chain is Cytoplasmic. The 4-aspartylphosphate intermediate role is filled by aspartate 434. Mg(2+)-binding residues include aspartate 634 and aspartate 638. Residues arginine 689–glycine 708 traverse the membrane as a helical segment. Over isoleucine 709–proline 720 the chain is Extracellular. Residues methionine 721–leucine 739 form a helical membrane-spanning segment. Topologically, residues arginine 740–arginine 747 are cytoplasmic.

This sequence belongs to the cation transport ATPase (P-type) (TC 3.A.3) family. Type IB subfamily.

The protein localises to the cell membrane. The enzyme catalyses Cu(+)(in) + ATP + H2O = Cu(+)(out) + ADP + phosphate + H(+). Functionally, may play a role in the osmotic adaptation. The chain is Probable copper-transporting ATPase PacS (pacS) from Synechococcus elongatus (strain ATCC 33912 / PCC 7942 / FACHB-805) (Anacystis nidulans R2).